A 360-amino-acid polypeptide reads, in one-letter code: Nicotinate-nucleotide--dimethylbenzimidazole phosphoribosyltransferase (360 aa).

Catalysis depends on glutamate 327, which acts as the Proton acceptor.

It belongs to the CobT family.

The enzyme catalyses 5,6-dimethylbenzimidazole + nicotinate beta-D-ribonucleotide = alpha-ribazole 5'-phosphate + nicotinate + H(+). Its pathway is nucleoside biosynthesis; alpha-ribazole biosynthesis; alpha-ribazole from 5,6-dimethylbenzimidazole: step 1/2. Catalyzes the synthesis of alpha-ribazole-5'-phosphate from nicotinate mononucleotide (NAMN) and 5,6-dimethylbenzimidazole (DMB). The sequence is that of Nicotinate-nucleotide--dimethylbenzimidazole phosphoribosyltransferase from Shewanella baltica (strain OS223).